The chain runs to 123 residues: UPF0102 protein Dole_2298 (123 aa).

This sequence belongs to the UPF0102 family.

The polypeptide is UPF0102 protein Dole_2298 (Desulfosudis oleivorans (strain DSM 6200 / JCM 39069 / Hxd3) (Desulfococcus oleovorans)).